A 310-amino-acid polypeptide reads, in one-letter code: Light-independent protochlorophyllide reductase iron-sulfur ATP-binding protein (310 aa).

Residues 53–58 (GIGKST) and lysine 82 contribute to the ATP site. Serine 57 provides a ligand contact to Mg(2+). [4Fe-4S] cluster-binding residues include cysteine 138 and cysteine 172. Residues 223–224 (NR) and 247–249 (PAL) each bind ATP.

The protein belongs to the NifH/BchL/ChlL family. As to quaternary structure, homodimer. Protochlorophyllide reductase is composed of three subunits; BchL, BchN and BchB. The cofactor is [4Fe-4S] cluster.

The enzyme catalyses chlorophyllide a + oxidized 2[4Fe-4S]-[ferredoxin] + 2 ADP + 2 phosphate = protochlorophyllide a + reduced 2[4Fe-4S]-[ferredoxin] + 2 ATP + 2 H2O. The protein operates within porphyrin-containing compound metabolism; bacteriochlorophyll biosynthesis (light-independent). Functionally, component of the dark-operative protochlorophyllide reductase (DPOR) that uses Mg-ATP and reduced ferredoxin to reduce ring D of protochlorophyllide (Pchlide) to form chlorophyllide a (Chlide). This reaction is light-independent. The L component serves as a unique electron donor to the NB-component of the complex, and binds Mg-ATP. In Rhodopseudomonas palustris (strain BisA53), this protein is Light-independent protochlorophyllide reductase iron-sulfur ATP-binding protein.